A 311-amino-acid polypeptide reads, in one-letter code: Acetyl-coenzyme A carboxylase carboxyl transferase subunit alpha (311 aa).

Residues 34-286 (EKDLQKEASK…KEYYLQNIRE (253 aa)) form the CoA carboxyltransferase C-terminal domain.

Belongs to the AccA family. Acetyl-CoA carboxylase is a heterohexamer composed of biotin carboxyl carrier protein (AccB), biotin carboxylase (AccC) and two subunits each of ACCase subunit alpha (AccA) and ACCase subunit beta (AccD).

The protein localises to the cytoplasm. It catalyses the reaction N(6)-carboxybiotinyl-L-lysyl-[protein] + acetyl-CoA = N(6)-biotinyl-L-lysyl-[protein] + malonyl-CoA. It functions in the pathway lipid metabolism; malonyl-CoA biosynthesis; malonyl-CoA from acetyl-CoA: step 1/1. Its function is as follows. Component of the acetyl coenzyme A carboxylase (ACC) complex. First, biotin carboxylase catalyzes the carboxylation of biotin on its carrier protein (BCCP) and then the CO(2) group is transferred by the carboxyltransferase to acetyl-CoA to form malonyl-CoA. The protein is Acetyl-coenzyme A carboxylase carboxyl transferase subunit alpha of Nitratiruptor sp. (strain SB155-2).